Reading from the N-terminus, the 364-residue chain is Poly(3-hydroxyalkanoate) polymerase subunit PhaE (364 aa).

The segment at serine 322–aspartate 364 is disordered. The span at lysine 324–lysine 338 shows a compositional bias: low complexity.

Belongs to the PHA/PHB synthase family. Type III PhaE subfamily. As to quaternary structure, forms a heterodimer with PhaC, which may multimerize in the presence of 3-hydroxybutyryl-CoA.

Its subcellular location is the cytoplasm. It functions in the pathway biopolymer metabolism; poly-(R)-3-hydroxybutanoate biosynthesis. In terms of biological role, polymerizes D(-)-3-hydroxybutyryl-CoA to create polyhydroxybutyrate (PHB) which consists of thousands of hydroxybutyrate molecules linked end to end. This subunit has no catalytic activity but enhances the activity of PhaC, the catalytic subunit. The protein is Poly(3-hydroxyalkanoate) polymerase subunit PhaE of Thiocystis violacea.